The chain runs to 146 residues: Snaclec coagulation factor X-activating enzyme light chain 1 (146 aa).

An N-terminal signal peptide occupies residues 1 to 23; sequence MGRFISVSFGCLVVFLSLSGTEA. Residues Cys-27 and Cys-38 are joined by a disulfide bond. The 112-residue stretch at 34–145 folds into the C-type lectin domain; the sequence is YEQHCYKGFN…CNFIAPVVCK (112 aa). Asn-47 carries an N-linked (GlcNAc...) (complex) asparagine glycan. 2 cysteine pairs are disulfide-bonded: Cys-55–Cys-144 and Cys-121–Cys-136.

The protein belongs to the snaclec family. Heterotrimer; disulfide-linked. The heterotrimer consists of 1 heavy chain (a metalloproteinase) and 2 light chains: LC1 and LC2. N-glycosylated; probably required for conformation. Removal of easily accessible sugars does not change its functional capacity, but removal of the core sugars with N-glycanase causes a virtually complete loss of enzyme activity, apparently as a result of major conformational changes in the molecule. Not O-glycosylated. Expressed by the venom gland.

Its subcellular location is the secreted. Its function is as follows. Regulatory subunit of the blood coagulation factor X- and IX-activating enzyme. The enzyme activates coagulation factor X (F10) by cleaving the Arg-Ile bond and is also able to activate coagulation factor IX (F9) and protein S (PROS1) by specific cleavage of Arg-Ile and Arg-Val bonds. May serve as an exosite by which the enzyme recognizes and binds to the Gla domain of factor X (F10) and factor IX (F9) in a calcium-dependent manner. This Daboia siamensis (Eastern Russel's viper) protein is Snaclec coagulation factor X-activating enzyme light chain 1 (LC1).